A 367-amino-acid chain; its full sequence is Peptide chain release factor 2 (367 aa).

Gln-254 bears the N5-methylglutamine mark.

Belongs to the prokaryotic/mitochondrial release factor family. Methylated by PrmC. Methylation increases the termination efficiency of RF2.

The protein localises to the cytoplasm. Peptide chain release factor 2 directs the termination of translation in response to the peptide chain termination codons UGA and UAA. The protein is Peptide chain release factor 2 of Aromatoleum aromaticum (strain DSM 19018 / LMG 30748 / EbN1) (Azoarcus sp. (strain EbN1)).